The following is a 293-amino-acid chain: Proline iminopeptidase (293 aa).

In terms of domain architecture, AB hydrolase-1 spans 28 to 277; that stretch reads KPLVLLHGGP…YSRHMPFVEE (250 aa). Serine 104 (nucleophile) is an active-site residue. Aspartate 244 is an active-site residue. The active-site Proton donor is the histidine 271.

This sequence belongs to the peptidase S33 family.

The enzyme catalyses Release of N-terminal proline from a peptide.. Releases the N-terminal proline from various substrates. In Clostridioides difficile (strain 630) (Peptoclostridium difficile), this protein is Proline iminopeptidase.